Consider the following 851-residue polypeptide: Transforming growth factor beta receptor type 3 (851 aa).

Residues 1 to 20 form the signal peptide; it reads MTSHYVIAIFALMSSCLATA. Residues 21-787 lie on the Extracellular side of the membrane; sequence GPEPGALCEL…IFHGLDTLTV (767 aa). C52 and C197 are oxidised to a cystine. N-linked (GlcNAc...) asparagine glycosylation is found at N141 and N492. The region spanning 455-730 is the ZP domain; it reads KCDNEKMIVA…PKCVPPDEAC (276 aa). O-linked (Xyl...) (glycosaminoglycan) serine glycosylation is found at S534 and S545. Residues N571, N590, and N697 are each glycosylated (N-linked (GlcNAc...) asparagine). 3 disulfide bridges follow: C639-C705, C660-C730, and C710-C723. Positions 737–751 are interaction with TGF-beta ligand; the sequence is IIWAMMQNKKTFTKP. The chain crosses the membrane as a helical span at residues 788-809; that stretch reads MGIAFAAFVIGALLTGALWYIY. At 810–851 the chain is on the cytoplasmic side; the sequence is SHTGETAGRQQVPTSPPASENSSAAHSIGSTQSTPCSSSSTA. Residues 816 to 851 form a disordered region; that stretch reads AGRQQVPTSPPASENSSAAHSIGSTQSTPCSSSSTA. Positions 817 to 834 are enriched in polar residues; sequence GRQQVPTSPPASENSSAA. Low complexity predominate over residues 836–851; sequence SIGSTQSTPCSSSSTA. T840 bears the Phosphothreonine mark.

Forms homodimers and homooligomers. Interacts with DYNLT4. Interacts with integrin ITGA5:ITGB1; this interaction promotes the internalization and trafficking of ITGA5:ITGB1 into endocytic vesicles. Interacts with TGFB1, BMP2, BMP5, BMP7 or GDF5 and inhibin A via the ligand binding domains. Interacts with ALK3/BMPR1A; this interaction results in the cell surface retention of BMPR1A. Interacts with ALK6/BMPR1B; this interaction enhances BMPR1B-mediated stimulation of the BMP signaling pathway. Interacts with the scaffolding protein beta-arrestin2/ARRB2; this interaction mediates internalization of TGFBR3 and thus regulates migration, actin cytoskeleton and activation of CDC42. As to quaternary structure, (Microbial infection) Interacts with human cytomegalovirus trimer complex composed of gH, gL, and gO; these interactions may promote HCMV cell entry in specific cell types. Extensively modified by glycosaminoglycan groups (GAG). In terms of processing, phosphorylated in the cytoplasmic domain by the type II receptor TGFBR2 at THR-840 to mediate recruitment of ARRB2 and subsequent internalization of TGFBR2 and TGFBR3.

It localises to the cell membrane. The protein localises to the secreted. It is found in the extracellular space. Its subcellular location is the extracellular matrix. Its function is as follows. Cell surface receptor that regulates diverse cellular processes including cell proliferation, differentiation, migration, and apoptosis. Initiates BMP, inhibin, and TGF-beta signaling pathways by interacting with different ligands including TGFB1, BMP2, BMP5, BMP7 or GDF5. Alternatively, acts as a cell surface coreceptor for BMP ligands, serving to enhance ligand binding by differentially regulating BMPR1A/ALK3 and BMPR1B/ALK6 receptor trafficking. Promotes epithelial cell adhesion, focal adhesion formation and integrin signaling during epithelial cell spreading on fibronectin. By interacting with the scaffolding protein beta-arrestin2/ARRB2, regulates migration or actin cytoskeleton and promotes the activation of CDC42 as well as the inhibition of NF-kappa-B. In gonadotrope cells, acts as an inhibin A coreceptor and regulates follicle-stimulating hormone (FSH) levels and female fertility. Plays a role in the inhibition of directed and random cell migration in epithelial cells by altering the actin cytoskeletal organization. Participates in epithelial-mesenchymal transformation (EMT) upon binding to BMP2 or TGFB2, by activating the PAR6/SMURF1/RHOA pathway. In terms of biological role, (Microbial infection) May act as a receptor for human cytomegalovirus in different cell types by interacting with HCMV trimer composed of GO, GH and GL. This Homo sapiens (Human) protein is Transforming growth factor beta receptor type 3.